We begin with the raw amino-acid sequence, 197 residues long: Cold-regulated 413 plasma membrane protein 1 (197 aa).

Topologically, residues 1-40 are extracellular; sequence MPMKSLRNDHGTLKAMIGSDFNELTIAAKNLATHAFTLTG. The helical transmembrane segment at 41-61 threads the bilayer; it reads LGFGTSVLEWVASIAAIYLLV. Over 62 to 71 the chain is Cytoplasmic; that stretch reads LDRTNWKTNM. A helical transmembrane segment spans residues 72–92; sequence LTSLLIPYIFFSLPSLIFGIF. Residues 93–94 are Extracellular-facing; it reads RG. A helical transmembrane segment spans residues 95-115; that stretch reads EIGKWIAFVAVVVQLFFPKHA. Residues 116–117 are Cytoplasmic-facing; it reads RE. A helical transmembrane segment spans residues 118 to 138; the sequence is YLELPVALVLLAVVAPNLIAG. Residues 139-141 are Extracellular-facing; sequence TFR. Residues 142–162 traverse the membrane as a helical segment; the sequence is DSWIGLAICLGIGCYLLQEHI. Topologically, residues 163 to 176 are cytoplasmic; that stretch reads RASGGFRNAFTKAN. The chain crosses the membrane as a helical span at residues 177–197; that stretch reads GISNTVGIICLVVFPVWALIF.

Belongs to the Cold-regulated 413 protein family.

It localises to the membrane. This chain is Cold-regulated 413 plasma membrane protein 1 (COR413PM1), found in Arabidopsis thaliana (Mouse-ear cress).